The sequence spans 412 residues: Angiopoietin-related protein 4 (412 aa).

The N-terminal stretch at 1-23 (MRSAPTARAALVLCAATAGLLSA) is a signal peptide. Positions 106–153 (ETLHSLQTQLKAQNSKIQQLFQKVAQQQRHLEKQHLRIQNLQGQLDHL) form a coiled coil. Asn183 carries an N-linked (GlcNAc...) asparagine glycan. The region spanning 185–407 (SRLHRLPRDC…ATTMLIQPTV (223 aa)) is the Fibrinogen C-terminal domain. 2 disulfide bridges follow: Cys194/Cys222 and Cys347/Cys360.

Homooligomer; disulfide-linked via Cys residues in the N-terminal part of the protein. The homooligomer undergoes proteolytic processing to release the ANGPTL4 C-terminal chain, which circulates as a monomer. The homooligomer unprocessed form is able to interact with the extracellular matrix. In terms of processing, N-glycosylated. Forms disulfide-linked dimers and tetramers. Post-translationally, cleaved into a smaller N-terminal chain and a larger chain that contains the fibrinogen C-terminal domain; both cleaved and uncleaved forms are detected in the extracellular space. The cleaved form is not present within the cell.

It is found in the secreted. The protein localises to the extracellular space. It localises to the extracellular matrix. Its function is as follows. Mediates inactivation of the lipoprotein lipase LPL, and thereby plays a role in the regulation of triglyceride clearance from the blood serum and in lipid metabolism. May also play a role in regulating glucose homeostasis and insulin sensitivity. Inhibits proliferation, migration, and tubule formation of endothelial cells and reduces vascular leakage. Upon heterologous expression, inhibits the adhesion of endothelial cell to the extracellular matrix (ECM), and inhibits the reorganization of the actin cytoskeleton, formation of actin stress fibers and focal adhesions in endothelial cells that have adhered to ANGPTL4-containing ECM (in vitro). Depending on context, may modulate tumor-related angiogenesis. Functionally, mediates inactivation of the lipoprotein lipase LPL, and thereby plays an important role in the regulation of triglyceride clearance from the blood serum and in lipid metabolism. Has higher activity in LPL inactivation than the uncleaved protein. This is Angiopoietin-related protein 4 (ANGPTL4) from Sus scrofa (Pig).